Consider the following 160-residue polypeptide: Phosphopantetheine adenylyltransferase (160 aa).

Substrate is bound at residue T10. ATP-binding positions include 10 to 11 (TF) and H18. Substrate contacts are provided by K42, M74, and R88. Residues 89–91 (GVR), E99, and 124–130 (WSYISST) contribute to the ATP site.

It belongs to the bacterial CoaD family. As to quaternary structure, homohexamer. The cofactor is Mg(2+).

Its subcellular location is the cytoplasm. The enzyme catalyses (R)-4'-phosphopantetheine + ATP + H(+) = 3'-dephospho-CoA + diphosphate. It functions in the pathway cofactor biosynthesis; coenzyme A biosynthesis; CoA from (R)-pantothenate: step 4/5. In terms of biological role, reversibly transfers an adenylyl group from ATP to 4'-phosphopantetheine, yielding dephospho-CoA (dPCoA) and pyrophosphate. The protein is Phosphopantetheine adenylyltransferase of Sodalis glossinidius (strain morsitans).